A 555-amino-acid chain; its full sequence is NAD-dependent protein deacetylase sirtuin-1 (555 aa).

A Nuclear localization signal motif is present at residues 39–46 (PPKRKKRK). The 261-residue stretch at 44 to 304 (KRKDINTIED…NELCHRLGGE (261 aa)) folds into the Deacetylase sirtuin-type domain. N6-acetyllysine is present on K46. Positions 64–67 (IIVL) are required for interaction with the sumoylated form of CCAR2. NAD(+) is bound by residues 69–88 (GAGVSVSCGIPDFRSRDGIY) and 153–156 (QNID). H171 (proton acceptor) is an active-site residue. Residues C179 and C182 each contribute to the Zn(2+) site. N6-acetyllysine is present on K185. Residues C203 and C206 each contribute to the Zn(2+) site. An S-nitrosocysteine mark is found at C203 and C206. Residue K238 is modified to N6-acetyllysine. A Nuclear export signal motif is present at residues 241-247 (VDLLIVI). NAD(+) contacts are provided by residues 248–250 (GSS), 273–275 (NRE), and C290. N6-acetyllysine is present on K321. Residues 335-354 (LPPTPLHISEDSSSPERTVP) form a disordered region. Phosphothreonine is present on T338. S343 is modified (phosphoserine). A compositionally biased stretch (polar residues) spans 345–354 (DSSSPERTVP). T352 is modified (phosphothreonine). Residue K417 is modified to N6-acetyllysine. 2 positions are modified to phosphoserine: S466 and S468. Residues 469 to 529 (EDDALSSSSC…GGSGADGGDQ (61 aa)) form a disordered region. Residues 473–493 (LSSSSCGSNSDSGTCQSPSLE) are compositionally biased toward low complexity. Residues 494-514 (EPLEDESEIEEFYNGLEDDAD) are compositionally biased toward acidic residues. The residue at position 552 (S552) is a Phosphoserine.

It belongs to the sirtuin family. Class I subfamily. In terms of assembly, interacts with XBP1 isoform 2. Found in a complex with PCAF and MYOD1. Interacts with FOXO1; the interaction deacetylates FOXO1, resulting in its nuclear retention and promotion of its transcriptional activity Component of the eNoSC complex, composed of SIRT1, SUV39H1 and RRP8. Interacts with HES1, HEY2 and PML. Interacts with RPS19BP1/AROS. Interacts with CCAR2 (via N-terminus); the interaction disrupts the interaction between SIRT1 and p53/TP53. Interacts with SETD7; the interaction induces the dissociation of SIRT1 from p53/TP53 and increases p53/TP53 activity. Interacts with MYCN, NR1I2, CREBZF, TSC2, TLE1, FOS, JUN, NR0B2, PPARG, NCOR, IRS1, IRS2 and NMNAT1. Interacts with HNF1A; the interaction occurs under nutrient restriction. Interacts with SUZ12; the interaction mediates the association with the PRC4 histone methylation complex which is specific as an association with PCR2 and PCR3 complex variants is not found. Interacts with HIV-1 tat. Interacts with BCL6; leads to a epigenetic repression of specific target genes. Interacts with CLOCK, BMAL1 and PER2. Interacts with PPARA; the interaction seems to be modulated by NAD(+) levels. Interacts with NR1H3 and this interaction is inhibited in the presence of CCAR2. Interacts with CHEK2. Interacts with p53/TP53. Exhibits a preferential interaction with sumoylated CCAR2 over its unmodified form. Interacts with PACS2. Interacts with SIRT7. Interacts with PUS7. Interacts with TULP3. Interacts with MORN3; the interaction enhances the ubiquitination of p53/TP53. Requires Zn(2+) as cofactor. Methylated on multiple lysine residues; methylation is enhanced after DNA damage and is dispensable for deacetylase activity toward p53/TP53. Post-translationally, phosphorylated. Phosphorylated by STK4/MST1, resulting in inhibition of SIRT1-mediated p53/TP53 deacetylation. Phosphorylation by MAPK8/JNK1 at Thr-338 leads to increased nuclear localization and enzymatic activity. Phosphorylation at Thr-338 by DYRK1A and DYRK3 activates deacetylase activity and promotes cell survival. Phosphorylated by CaMK2, leading to increased p53/TP53 and NF-kappa-B p65/RELA deacetylation activity. In terms of processing, S-nitrosylated by GAPDH, leading to inhibit the NAD-dependent protein deacetylase activity. Acetylated at various Lys residues. Deacetylated via an autocatalytic mechanism. Autodeacetylation at Lys-46 promotes its protein deacetylase activity. Post-translationally, ubiquitinated; leading to degradation. Deubiquitinated by USP22; leading to stabilization.

It is found in the nucleus. The protein localises to the PML body. Its subcellular location is the cytoplasm. It carries out the reaction N(6)-acetyl-L-lysyl-[protein] + NAD(+) + H2O = 2''-O-acetyl-ADP-D-ribose + nicotinamide + L-lysyl-[protein]. The enzyme catalyses N(6)-propanoyl-L-lysyl-[protein] + NAD(+) + H2O = 3''-O-propanoyl-ADP-D-ribose + nicotinamide + L-lysyl-[protein]. It catalyses the reaction N(6)-(2E)-butenoyl-L-lysyl-[protein] + NAD(+) + H2O = 2''-O-(2E)-but-2-enoyl-ADP-D-ribose + nicotinamide + L-lysyl-[protein]. Inhibited by nicotinamide. Activated by resveratrol (3,5,4'-trihydroxy-trans-stilbene), butein (3,4,2',4'-tetrahydroxychalcone), piceatannol (3,5,3',4'-tetrahydroxy-trans-stilbene), Isoliquiritigenin (4,2',4'-trihydroxychalcone), fisetin (3,7,3',4'-tetrahydroxyflavone) and quercetin (3,5,7,3',4'-pentahydroxyflavone). MAPK8/JNK1 and RPS19BP1/AROS act as positive regulators of deacetylation activity. Negatively regulated by CCAR2. In terms of biological role, NAD-dependent protein deacetylase that links transcriptional regulation directly to intracellular energetics and participates in the coordination of several separated cellular functions such as cell cycle, response to DNA damage, metabolism, apoptosis and autophagy. Can modulate chromatin function through deacetylation of histones and can promote alterations in the methylation of histones and DNA, leading to transcriptional repression. Deacetylates a broad range of transcription factors and coregulators, thereby regulating target gene expression positively and negatively. Serves as a sensor of the cytosolic ratio of NAD(+)/NADH which is altered by glucose deprivation and metabolic changes associated with caloric restriction. Is essential in skeletal muscle cell differentiation and in response to low nutrients mediates the inhibitory effect on skeletal myoblast differentiation which also involves 5'-AMP-activated protein kinase (AMPK) and nicotinamide phosphoribosyltransferase (NAMPT). Component of the eNoSC (energy-dependent nucleolar silencing) complex, a complex that mediates silencing of rDNA in response to intracellular energy status and acts by recruiting histone-modifying enzymes. The eNoSC complex is able to sense the energy status of cell: upon glucose starvation, elevation of NAD(+)/NADP(+) ratio activates SIRT1, leading to histone H3 deacetylation followed by dimethylation of H3 at 'Lys-9' (H3K9me2) by SUV39H1 and the formation of silent chromatin in the rDNA locus. Deacetylates 'Lys-266' of SUV39H1, leading to its activation. Inhibits skeletal muscle differentiation by deacetylating PCAF and MYOD1. Deacetylates H2A and 'Lys-26' of H1-4. Deacetylates 'Lys-16' of histone H4 (in vitro). Involved in NR0B2/SHP corepression function through chromatin remodeling: Recruited to LRH1 target gene promoters by NR0B2/SHP thereby stimulating histone H3 and H4 deacetylation leading to transcriptional repression. Proposed to contribute to genomic integrity via positive regulation of telomere length; however, reports on localization to pericentromeric heterochromatin are conflicting. Proposed to play a role in constitutive heterochromatin (CH) formation and/or maintenance through regulation of the available pool of nuclear SUV39H1. Upon oxidative/metabolic stress decreases SUV39H1 degradation by inhibiting SUV39H1 polyubiquitination by MDM2. This increase in SUV39H1 levels enhances SUV39H1 turnover in CH, which in turn seems to accelerate renewal of the heterochromatin which correlates with greater genomic integrity during stress response. Deacetylates 'Lys-382' of p53/TP53 and impairs its ability to induce transcription-dependent proapoptotic program and modulate cell senescence. Deacetylates TAF1B and thereby represses rDNA transcription by the RNA polymerase I. Deacetylates MYC, promotes the association of MYC with MAX and decreases MYC stability leading to compromised transformational capability. Deacetylates FOXO3 in response to oxidative stress thereby increasing its ability to induce cell cycle arrest and resistance to oxidative stress but inhibiting FOXO3-mediated induction of apoptosis transcriptional activity; also leading to FOXO3 ubiquitination and protesomal degradation. Appears to have a similar effect on MLLT7/FOXO4 in regulation of transcriptional activity and apoptosis. Deacetylates DNMT1; thereby impairs DNMT1 methyltransferase-independent transcription repressor activity, modulates DNMT1 cell cycle regulatory function and DNMT1-mediated gene silencing. Deacetylates RELA/NF-kappa-B p65 thereby inhibiting its transactivating potential and augments apoptosis in response to TNF-alpha. Deacetylates HIF1A, KAT5/TIP60, RB1 and HIC1. Deacetylates FOXO1 resulting in its nuclear retention and enhancement of its transcriptional activity leading to increased gluconeogenesis in liver. Inhibits E2F1 transcriptional activity and apoptotic function, possibly by deacetylation. Involved in HES1- and HEY2-mediated transcriptional repression. In cooperation with MYCN seems to be involved in transcriptional repression of DUSP6/MAPK3 leading to MYCN stabilization by phosphorylation at 'Ser-62'. Deacetylates MEF2D. Required for antagonist-mediated transcription suppression of AR-dependent genes which may be linked to local deacetylation of histone H3. Represses HNF1A-mediated transcription. Required for the repression of ESRRG by CREBZF. Deacetylates NR1H3 AND NR1H2 and deacetylation of NR1H3 at 'Lys-434' positively regulates transcription of NR1H3:RXR target genes, promotes NR1H3 proteasomal degradation and results in cholesterol efflux; a promoter clearing mechanism after reach round of transcription is proposed. Involved in lipid metabolism: deacetylates LPIN1, thereby inhibiting diacylglycerol synthesis. Implicated in regulation of adipogenesis and fat mobilization in white adipocytes by repression of PPARG which probably involves association with NCOR1 and SMRT/NCOR2. Deacetylates p300/EP300 and PRMT1. Deacetylates ACSS2 leading to its activation, and HMGCS1 deacetylation. Involved in liver and muscle metabolism. Through deacetylation and activation of PPARGC1A is required to activate fatty acid oxidation in skeletal muscle under low-glucose conditions and is involved in glucose homeostasis. Involved in regulation of PPARA and fatty acid beta-oxidation in liver. Involved in positive regulation of insulin secretion in pancreatic beta cells in response to glucose; the function seems to imply transcriptional repression of UCP2. Proposed to deacetylate IRS2 thereby facilitating its insulin-induced tyrosine phosphorylation. Deacetylates SREBF1 isoform SREBP-1C thereby decreasing its stability and transactivation in lipogenic gene expression. Involved in DNA damage response by repressing genes which are involved in DNA repair, such as XPC and TP73, deacetylating XRCC6/Ku70, and facilitating recruitment of additional factors to sites of damaged DNA, such as SIRT1-deacetylated NBN can recruit ATM to initiate DNA repair and SIRT1-deacetylated XPA interacts with RPA2. Also involved in DNA repair of DNA double-strand breaks by homologous recombination and specifically single-strand annealing independently of XRCC6/Ku70 and NBN. Promotes DNA double-strand breaks by mediating deacetylation of SIRT6. Transcriptional suppression of XPC probably involves an E2F4:RBL2 suppressor complex and protein kinase B (AKT) signaling. Transcriptional suppression of TP73 probably involves E2F4 and PCAF. Deacetylates WRN thereby regulating its helicase and exonuclease activities and regulates WRN nuclear translocation in response to DNA damage. Deacetylates APEX1 at 'Lys-6' and 'Lys-7' and stimulates cellular AP endonuclease activity by promoting the association of APEX1 to XRCC1. Catalyzes deacetylation of ERCC4/XPF, thereby impairing interaction with ERCC1 and nucleotide excision repair (NER). Increases p53/TP53-mediated transcription-independent apoptosis by blocking nuclear translocation of cytoplasmic p53/TP53 and probably redirecting it to mitochondria. Deacetylates XRCC6/Ku70 at 'Lys-539' and 'Lys-542' causing it to sequester BAX away from mitochondria thereby inhibiting stress-induced apoptosis. Is involved in autophagy, presumably by deacetylating ATG5, ATG7 and MAP1LC3B/ATG8. Deacetylates AKT1 which leads to enhanced binding of AKT1 and PDK1 to PIP3 and promotes their activation. Proposed to play role in regulation of STK11/LBK1-dependent AMPK signaling pathways implicated in cellular senescence which seems to involve the regulation of the acetylation status of STK11/LBK1. Can deacetylate STK11/LBK1 and thereby increase its activity, cytoplasmic localization and association with STRAD; however, the relevance of such activity in normal cells is unclear. In endothelial cells is shown to inhibit STK11/LBK1 activity and to promote its degradation. Deacetylates SMAD7 at 'Lys-64' and 'Lys-70' thereby promoting its degradation. Deacetylates CIITA and augments its MHC class II transactivation and contributes to its stability. Deacetylates MECOM/EVI1. Deacetylates PML at 'Lys-487' and this deacetylation promotes PML control of PER2 nuclear localization. During the neurogenic transition, represses selective NOTCH1-target genes through histone deacetylation in a BCL6-dependent manner and leading to neuronal differentiation. Regulates the circadian expression of several core clock genes, including BMAL1, RORC, PER2 and CRY1 and plays a critical role in maintaining a controlled rhythmicity in histone acetylation, thereby contributing to circadian chromatin remodeling. Deacetylates BMAL1 and histones at the circadian gene promoters in order to facilitate repression by inhibitory components of the circadian oscillator. Deacetylates PER2, facilitating its ubiquitination and degradation by the proteasome. Protects cardiomyocytes against palmitate-induced apoptosis. Deacetylates XBP1 isoform 2; deacetylation decreases protein stability of XBP1 isoform 2 and inhibits its transcriptional activity. Deacetylates PCK1 and directs its activity toward phosphoenolpyruvate production promoting gluconeogenesis. Involved in the CCAR2-mediated regulation of PCK1 and NR1D1. Deacetylates CTNB1 at 'Lys-49'. In POMC (pro-opiomelanocortin) neurons, required for leptin-induced activation of PI3K signaling. In addition to protein deacetylase activity, also acts as a protein-lysine deacylase by mediating protein depropionylation and decrotonylation. Mediates depropionylation of Osterix (SP7). Catalyzes decrotonylation of histones; it however does not represent a major histone decrotonylase. Deacetylates SOX9; promoting SOX9 nuclear localization and transactivation activity. Involved in the regulation of centrosome duplication. Deacetylates CENATAC in G1 phase, allowing for SASS6 accumulation on the centrosome and subsequent procentriole assembly. Deacetylates NDC80/HEC1. In Rattus norvegicus (Rat), this protein is NAD-dependent protein deacetylase sirtuin-1.